A 193-amino-acid polypeptide reads, in one-letter code: FMN-dependent NADH:quinone oxidoreductase (193 aa).

FMN-binding positions include S9, 15 to 17 (SSS), and 137 to 140 (TSGG).

The protein belongs to the azoreductase type 1 family. As to quaternary structure, homodimer. FMN serves as cofactor.

The catalysed reaction is 2 a quinone + NADH + H(+) = 2 a 1,4-benzosemiquinone + NAD(+). The enzyme catalyses N,N-dimethyl-1,4-phenylenediamine + anthranilate + 2 NAD(+) = 2-(4-dimethylaminophenyl)diazenylbenzoate + 2 NADH + 2 H(+). Its function is as follows. Quinone reductase that provides resistance to thiol-specific stress caused by electrophilic quinones. In terms of biological role, also exhibits azoreductase activity. Catalyzes the reductive cleavage of the azo bond in aromatic azo compounds to the corresponding amines. This chain is FMN-dependent NADH:quinone oxidoreductase, found in Pelagibacter ubique (strain HTCC1062).